A 414-amino-acid polypeptide reads, in one-letter code: Ankyrin repeat domain-containing protein 10 (414 aa).

5 ANK repeats span residues Thr18–Leu47, Tyr54–Ala83, Phe88–Lys117, Val121–Leu150, and Ser154–Ser187. The segment at Gly310–Met332 is disordered.

The chain is Ankyrin repeat domain-containing protein 10 (ANKRD10) from Gallus gallus (Chicken).